Consider the following 196-residue polypeptide: DnaA initiator-associating protein DiaA (196 aa).

Positions 34 to 196 constitute an SIS domain; that stretch reads LVHSLLNGNK…DNTLFLHQDD (163 aa).

Belongs to the SIS family. DiaA subfamily. As to quaternary structure, homotetramer; dimer of dimers.

Functionally, required for the timely initiation of chromosomal replication via direct interactions with the DnaA initiator protein. In Salmonella paratyphi A (strain ATCC 9150 / SARB42), this protein is DnaA initiator-associating protein DiaA.